Here is a 255-residue protein sequence, read N- to C-terminus: Serine/threonine-protein phosphatase PP1 (255 aa).

Residues aspartate 2, histidine 4, aspartate 30, and asparagine 62 each contribute to the Mn(2+) site. Histidine 63 (proton donor) is an active-site residue. Residues histidine 111 and histidine 186 each contribute to the Mn(2+) site.

The protein belongs to the PPP phosphatase family. PP-1 subfamily. Requires Mn(2+) as cofactor.

The catalysed reaction is O-phospho-L-seryl-[protein] + H2O = L-seryl-[protein] + phosphate. It carries out the reaction O-phospho-L-threonyl-[protein] + H2O = L-threonyl-[protein] + phosphate. This chain is Serine/threonine-protein phosphatase PP1, found in Brassica napus (Rape).